A 198-amino-acid chain; its full sequence is Large ribosomal subunit protein bL25 (198 aa).

This sequence belongs to the bacterial ribosomal protein bL25 family. CTC subfamily. Part of the 50S ribosomal subunit; part of the 5S rRNA/L5/L18/L25 subcomplex. Contacts the 5S rRNA. Binds to the 5S rRNA independently of L5 and L18.

Functionally, this is one of the proteins that binds to the 5S RNA in the ribosome where it forms part of the central protuberance. This Lysinibacillus sphaericus (strain C3-41) protein is Large ribosomal subunit protein bL25.